The sequence spans 277 residues: Outer kinetochore KNL1 complex subunit ZWINT (277 aa).

Residues 80 to 155 (ASEDTSRQKA…MEKRRAVQNQ (76 aa)) form an interaction with NDC80 and ZW10 region. Positions 104–217 (REHVEAIKIG…RYQTFLQLLY (114 aa)) form a coiled coil. The segment at 228 to 277 (AEAEAENLPDDKPQQPTRPQEQSTGDTMGRDPGVSFKAVGLQPAGDVNLP) is disordered. The span at 241 to 253 (QQPTRPQEQSTGD) shows a compositional bias: polar residues.

As to quaternary structure, component of the KNL1 complex composed of KNL1 and ZWINT. Part of the ten-subunit outer kinetochore KMN network that includes the KNL1, MIS12 and NDC80 complexes; a bioriented kinetochore contains approximately 150 copies of the network. Interacts with the MIS12 complex subunits MIS12 DSN1, and PMF1. Interacts with the NDC80 complex subunit NDC80 during mitosis. Interacts with ZW10. Interacts with CETN3.

The protein resides in the nucleus. It is found in the chromosome. Its subcellular location is the centromere. It localises to the kinetochore. Its function is as follows. Acts as a component of the outer kinetochore KNL1 complex that serves as a docking point for spindle assembly checkpoint components and mediates microtubule-kinetochore interactions. Kinetochores, consisting of a centromere-associated inner segment and a microtubule-contacting outer segment, play a crucial role in chromosome segregation by mediating the physical connection between centromeric DNA and spindle microtubules. The outer kinetochore is made up of the ten-subunit KMN network, comprising the MIS12, NDC80 and KNL1 complexes, and auxiliary microtubule-associated components; together they connect the outer kinetochore with the inner kinetochore, bind microtubules, and mediate interactions with mitotic checkpoint proteins that delay anaphase until chromosomes are bioriented on the spindle. Targets the RZZ complex to the kinetochore at prometaphase. Recruits MAD2L1 to the kinetochore, but is not required for BUB1B localization. In addition to orienting mitotic chromosomes, it is also essential for alignment of homologous chromosomes during meiotic metaphase I. In meiosis I, required to activate the spindle assembly checkpoint at unattached kinetochores to correct erroneous kinetochore-microtubule attachments. The protein is Outer kinetochore KNL1 complex subunit ZWINT (ZWINT) of Homo sapiens (Human).